We begin with the raw amino-acid sequence, 205 residues long: Pectinesterase inhibitor 3 (205 aa).

The first 25 residues, 1–25 (MAPTQNLFLVAIAFAVIFTASTVHG), serve as a signal peptide directing secretion. 2 cysteine pairs are disulfide-bonded: Cys38-Cys47 and Cys104-Cys156.

This sequence belongs to the PMEI family. As to expression, expressed in apical meristem.

It is found in the secreted. It localises to the extracellular space. The protein resides in the apoplast. Pectin methylesterase (PME) inhibitor that can target PMEs (e.g. PME2 and PME3) in a pH-dependent manner, mainly in slightly acidic conditions (pH 6.3 and 5.0) but not at pH 7.5; this processus relies on changes in the protonation of amino acids involved in intermolecular and intramolecular interactions. Regulates de-methylesterification of pectins in the apical meristem and affects primordia formation and phyllotactic patterning. The polypeptide is Pectinesterase inhibitor 3 (Arabidopsis thaliana (Mouse-ear cress)).